Here is a 738-residue protein sequence, read N- to C-terminus: Elongation factor G, mitochondrial (738 aa).

The disordered stretch occupies residues M1 to Q20. The tr-type G domain occupies R32–A320. GTP contacts are provided by residues A41 to T48, D118 to H122, and N172 to D175.

The protein belongs to the TRAFAC class translation factor GTPase superfamily. Classic translation factor GTPase family. EF-G/EF-2 subfamily.

The protein localises to the mitochondrion. Its pathway is protein biosynthesis; polypeptide chain elongation. In terms of biological role, mitochondrial GTPase that catalyzes the GTP-dependent ribosomal translocation step during translation elongation. During this step, the ribosome changes from the pre-translocational (PRE) to the post-translocational (POST) state as the newly formed A-site-bound peptidyl-tRNA and P-site-bound deacylated tRNA move to the P and E sites, respectively. Catalyzes the coordinated movement of the two tRNA molecules, the mRNA and conformational changes in the ribosome. This chain is Elongation factor G, mitochondrial, found in Laccaria bicolor (strain S238N-H82 / ATCC MYA-4686) (Bicoloured deceiver).